The primary structure comprises 286 residues: Perivitellin-2 31 kDa subunit (286 aa).

Positions methionine 1–alanine 30 are cleaved as a signal peptide. N-linked (GlcNAc...) asparagine glycosylation is present at asparagine 101.

The protein belongs to the tectonin family. As to quaternary structure, perivitellin-2 is a dimer of heterodimers held together head-to-tail by non-covalent forces. The heterodimer is composed of the tachylectin subunit (31 kDa) and the MACPF subunit (67 kDa) that are disulfide-linked. Post-translationally, PV2 is a very high density lipoprotein (VHDL). It contains 3.75% of lipids. The major lipid classes are free sterols and phospholipids and also have significant quantities of energy-providing triacylglycerides and free fatty acids. Produced by albumen secretory cells. Found in developing eggs.

The protein localises to the secreted. Its subcellular location is the target cell membrane. In terms of biological role, the egg defensive protein perivitellin-2 is a pore-forming two-subunit glycoprotein that affects both the nervous and digestive systems of mammals. In addition, it is a source of both structural and energetic molecules during embryonic development. The tachylectin subunit (31 kDa) binds target membranes while the MACPF subunit (67 kDa) disrupts lipid bilayers forming large pores (inner diameter of about 5.6 nm) altering the plasma membrance conductance. Both in vivo and in vitro, the protein shows wide pH range stability and is resistant to enzymatic proteolysis from gastrointestinal environments. It is cytotoxic to both epithelial and immune cells from the digestive system of mammals. It induces enterocyte death by a lytic mechanism and disrupts enterocyte monolayers in a dose-dependent manner. After oral administration to mice, it binds enterocytes and induces large dose-dependent morphological changes on their small intestine mucosa, reducing the absorptive surface. Additionally, it is detected in the Peyer's patches where it activates lymphoid follicles and triggers apoptosis. The toxin can also traverse the intestinal barrier and induce oral adaptive immunity with evidence of circulating antibody response. The toxin also shows hemagglutination properties thanks to the tachylectin subunit, but has no hemolytic activity. In addition to enterotoxin activity, the toxin also acts as a neurotoxin, since an intraperitoneal injection can induce paralysis of the mice rear limbs, followed by death. In Pomacea maculata (Giant applesnail), this protein is Perivitellin-2 31 kDa subunit.